Here is a 166-residue protein sequence, read N- to C-terminus: V-type proton ATPase subunit c4 (166 aa).

Residues 1 to 13 are Lumenal-facing; it reads MASSGFSGDETAP. The helical transmembrane segment at 14–34 threads the bilayer; the sequence is FFGFLGAAAALVFSCMGAAYG. Residues 35-56 are Cytoplasmic-facing; it reads TAKSGVGVASMGVMRPELVMKS. The chain crosses the membrane as a helical span at residues 57–77; sequence IVPVVMAGVLGIYGLIIAVII. The Lumenal portion of the chain corresponds to 78-96; it reads STGINPKAKSYYLFDGYAH. Residues 97–118 form a helical membrane-spanning segment; the sequence is LSSGLACGLAGLSAGMAIGIVG. Residues 119–130 lie on the Cytoplasmic side of the membrane; that stretch reads DAGVRANAQQPK. A helical membrane pass occupies residues 131 to 156; the sequence is LFVGMILILIFAEALALYGLIVGIIL. At 157 to 166 the chain is on the lumenal side; sequence SSRAGQSRAE.

The protein belongs to the V-ATPase proteolipid subunit family. V-ATPase is a heteromultimeric enzyme composed of a peripheral catalytic V1 complex (components A to H) attached to an integral membrane V0 proton pore complex (components: a, c, c'', d and e). The proteolipid components c and c'' are present as a hexameric ring that forms the proton-conducting pore. Interacts with APD2.

It localises to the vacuole membrane. Its function is as follows. Proton-conducting pore forming subunit of the membrane integral V0 complex of vacuolar ATPase. V-ATPase is responsible for acidifying a variety of intracellular compartments in eukaryotic cells. The protein is V-type proton ATPase subunit c4 (VHA-c4) of Arabidopsis thaliana (Mouse-ear cress).